Here is a 345-residue protein sequence, read N- to C-terminus: GDP-mannose transporter (345 aa).

Over 1-8 the chain is Cytoplasmic; that stretch reads MDNHMLNR. A helical transmembrane segment spans residues 9-29; it reads ISKSPILPVVSYCMASILMTL. The Lumenal portion of the chain corresponds to 30 to 40; it reads TNKYVLSSPGY. A helical transmembrane segment spans residues 41–61; it reads NMNFLLLTVQSTVCVAAIGIL. Over 62–78 the chain is Cytoplasmic; sequence KRLKVINYRDFDFREAK. A helical membrane pass occupies residues 79-101; that stretch reads FWFPISFLLVAMIYTASKALQFL. Residues 102–104 are Lumenal-facing; sequence SVP. Residues 105 to 127 traverse the membrane as a helical segment; sequence VYTIFKNLTIIIIAYGEVLWFGG. Residues 128–131 lie on the Cytoplasmic side of the membrane; sequence HVTA. A helical membrane pass occupies residues 132–150; the sequence is LTLFSFGLMVLSSIVAAWA. Residues 151-161 lie on the Lumenal side of the membrane; it reads DIQSSSFASQT. The helical transmembrane segment at 162 to 182 threads the bilayer; it reads LNSGYLWMVLNCLTNAAFVLA. At 183–194 the chain is on the cytoplasmic side; it reads MRKRIKLTNFRD. The chain crosses the membrane as a helical span at residues 195–215; that stretch reads FDTMFYNNLLSIPVLVICTLF. The Lumenal portion of the chain corresponds to 216–233; that stretch reads TEDWSAENIAQNFPPDAK. The chain crosses the membrane as a helical span at residues 234–254; it reads FGVLMAMAISGVSSVGISYTS. At 255–264 the chain is on the cytoplasmic side; sequence AWCVRVTSST. Residues 265-285 form a helical membrane-spanning segment; it reads TYSMVGALNKLPLAIAGLVFF. Residues 286-288 lie on the Lumenal side of the membrane; sequence DAP. A helical transmembrane segment spans residues 289-309; sequence ITFGSVTAILLGFISGVVYAV. Topologically, residues 310 to 345 are cytoplasmic; sequence AKSQQQRQKDPATILPMTHNPVSASSQSMRDSLSKS. The disordered stretch occupies residues 319-345; the sequence is DPATILPMTHNPVSASSQSMRDSLSKS. A compositionally biased stretch (polar residues) spans 329–345; it reads NPVSASSQSMRDSLSKS.

The protein belongs to the TPT transporter family. SLC35D subfamily. Homooligomer.

It localises to the golgi apparatus membrane. The protein localises to the cytoplasmic vesicle membrane. The protein resides in the endoplasmic reticulum membrane. Involved in the import of GDP-mannose from the cytoplasm into the Golgi lumen. The protein is GDP-mannose transporter (vrg4) of Schizosaccharomyces pombe (strain 972 / ATCC 24843) (Fission yeast).